Reading from the N-terminus, the 359-residue chain is Membrane-bound lytic murein transglycosylase C (359 aa).

Positions methionine 1 to serine 16 are cleaved as a signal peptide. The N-palmitoyl cysteine moiety is linked to residue cysteine 17. A lipid anchor (S-diacylglycerol cysteine) is attached at cysteine 17.

It belongs to the transglycosylase Slt family.

It localises to the cell outer membrane. It carries out the reaction Exolytic cleavage of the (1-&gt;4)-beta-glycosidic linkage between N-acetylmuramic acid (MurNAc) and N-acetylglucosamine (GlcNAc) residues in peptidoglycan, from either the reducing or the non-reducing ends of the peptidoglycan chains, with concomitant formation of a 1,6-anhydrobond in the MurNAc residue.. Its function is as follows. Murein-degrading enzyme. May play a role in recycling of muropeptides during cell elongation and/or cell division. The chain is Membrane-bound lytic murein transglycosylase C from Edwardsiella ictaluri (strain 93-146).